A 325-amino-acid polypeptide reads, in one-letter code: Lipid droplet-associated hydrolase (325 aa).

Ser-139 serves as the catalytic Nucleophile. Active-site charge relay system residues include Asp-271 and His-300.

Belongs to the AB hydrolase superfamily. LDAH family.

It is found in the lipid droplet. The protein localises to the endoplasmic reticulum. It catalyses the reaction a cholesterol ester + H2O = cholesterol + a fatty acid + H(+). Its function is as follows. Probable serine lipid hydrolase associated with lipid droplets. Has low cholesterol esterase activity. Appears to lack triglyceride lipase activity. Involved in cholesterol and triglyceride homeostasis; stimulates cellular triglyceride accumulation and cellular cholesterol release. Acts antagonistically with PNPLA2/ATGL in regulation of cellular lipid stores. May regulate triglyceride accumulation indirectly through stimulation of PNPLA2/ATGL ubiquitination and proteasomal degradation. Promotes microtubule-dependent lipid droplet fusion. Highly expressed in macrophage-rich areas in atherosclerotic lesions, suggesting that it could promote cholesterol ester turnover in macrophages. The protein is Lipid droplet-associated hydrolase of Pongo abelii (Sumatran orangutan).